The sequence spans 431 residues: Probable ganciclovir kinase (431 aa).

A Protein kinase domain is found at 79-368 (PQEDAVLGSG…KLSIGIDSFG (290 aa)). Residues 85-93 (LGSGSFGSV) and K103 contribute to the ATP site. D195 acts as the Proton acceptor in catalysis.

This sequence belongs to the protein kinase superfamily. Tyr protein kinase family. HCMV ganciclovir subfamily.

Functionally, phosphorylates the antiviral nucleoside analog ganciclovir. This chain is Probable ganciclovir kinase (36), found in Saimiriine herpesvirus 2 (strain 11) (SaHV-2).